Reading from the N-terminus, the 344-residue chain is tRNA N6-adenosine threonylcarbamoyltransferase (344 aa).

2 residues coordinate Fe cation: His-116 and His-120. Residues 138–142, Asp-171, Gly-184, Asp-188, and Asn-277 each bind substrate; that span reads LVSGG. Asp-307 lines the Fe cation pocket.

The protein belongs to the KAE1 / TsaD family. Fe(2+) is required as a cofactor.

Its subcellular location is the cytoplasm. The catalysed reaction is L-threonylcarbamoyladenylate + adenosine(37) in tRNA = N(6)-L-threonylcarbamoyladenosine(37) in tRNA + AMP + H(+). Functionally, required for the formation of a threonylcarbamoyl group on adenosine at position 37 (t(6)A37) in tRNAs that read codons beginning with adenine. Is involved in the transfer of the threonylcarbamoyl moiety of threonylcarbamoyl-AMP (TC-AMP) to the N6 group of A37, together with TsaE and TsaB. TsaD likely plays a direct catalytic role in this reaction. The chain is tRNA N6-adenosine threonylcarbamoyltransferase from Latilactobacillus sakei subsp. sakei (strain 23K) (Lactobacillus sakei subsp. sakei).